A 333-amino-acid polypeptide reads, in one-letter code: Beta-ketoacyl-[acyl-carrier-protein] synthase III (333 aa).

Active-site residues include Cys-116 and His-258. The segment at 259-263 is ACP-binding; it reads QANKR. Residue Asn-288 is part of the active site.

Belongs to the thiolase-like superfamily. FabH family. As to quaternary structure, homodimer.

The protein localises to the cytoplasm. The enzyme catalyses malonyl-[ACP] + acetyl-CoA + H(+) = 3-oxobutanoyl-[ACP] + CO2 + CoA. It participates in lipid metabolism; fatty acid biosynthesis. Catalyzes the condensation reaction of fatty acid synthesis by the addition to an acyl acceptor of two carbons from malonyl-ACP. Catalyzes the first condensation reaction which initiates fatty acid synthesis and may therefore play a role in governing the total rate of fatty acid production. Possesses both acetoacetyl-ACP synthase and acetyl transacylase activities. Its substrate specificity determines the biosynthesis of branched-chain and/or straight-chain of fatty acids. The polypeptide is Beta-ketoacyl-[acyl-carrier-protein] synthase III (Koribacter versatilis (strain Ellin345)).